Consider the following 286-residue polypeptide: Polyamine aminopropyltransferase 1 (286 aa).

The 235-residue stretch at 1 to 235 (MSDYQETLYQ…GAMTFAWGST (235 aa)) folds into the PABS domain. Gln30 lines the S-methyl-5'-thioadenosine pocket. Spermidine is bound by residues His61 and Asp85. Residues Glu105 and 137 to 138 (DG) contribute to the S-methyl-5'-thioadenosine site. Asp155 acts as the Proton acceptor in catalysis. Spermidine is bound at residue 155 to 158 (DSTD). Pro162 serves as a coordination point for S-methyl-5'-thioadenosine.

The protein belongs to the spermidine/spermine synthase family. In terms of assembly, homodimer or homotetramer.

It is found in the cytoplasm. The enzyme catalyses S-adenosyl 3-(methylsulfanyl)propylamine + putrescine = S-methyl-5'-thioadenosine + spermidine + H(+). It participates in amine and polyamine biosynthesis; spermidine biosynthesis; spermidine from putrescine: step 1/1. In terms of biological role, catalyzes the irreversible transfer of a propylamine group from the amino donor S-adenosylmethioninamine (decarboxy-AdoMet) to putrescine (1,4-diaminobutane) to yield spermidine. The protein is Polyamine aminopropyltransferase 1 of Pseudomonas aeruginosa (strain ATCC 15692 / DSM 22644 / CIP 104116 / JCM 14847 / LMG 12228 / 1C / PRS 101 / PAO1).